The following is a 288-amino-acid chain: MSKKLLFQFDTDATPSVFDVVVGYDGGADHITGYGNVTPDNVGAYVDGTIYTRGGKEKQSTAIFVGGGDMAAGERVFEAVKKRFFGPFRVSCMLDSNGSNTTAAAGVALVVKAAGGSVKGKKAVVLAGTGPVGMRSAALLAGEGAEVVLCGRKLDKAQAAADSVNKRFKVNVTAAETADDASRAEAVKGAHFVFTAGAIGLELLPQAAWQNESSIEIVADYNAQPPLGIGGIDATDKGKEYGGKRAFGALGIGGLKLKLHRACIAKLFESSEGVFDAEEIYKLAKEMA.

NADP(+) contacts are provided by residues 129 to 132, 152 to 156, 195 to 198, and K256; these read TGPV, RKLDK, and TAGA.

In terms of assembly, homotrimer.

The protein resides in the cytoplasm. It catalyses the reaction 5,10-methylenetetrahydromethanopterin + NADP(+) = 5,10-methenyl-5,6,7,8-tetrahydromethanopterin + NADPH. It carries out the reaction (6R)-5,10-methylene-5,6,7,8-tetrahydrofolate + NADP(+) = (6R)-5,10-methenyltetrahydrofolate + NADPH. It functions in the pathway one-carbon metabolism; formaldehyde degradation; formate from formaldehyde (H(4)MPT route): step 2/5. Catalyzes the dehydrogenation of methylene-H(4)MPT. Can also catalyze the reversible dehydrogenation of methylene-H(4)F with 20-fold lower catalytic efficiency. This Methylorubrum extorquens (strain ATCC 14718 / DSM 1338 / JCM 2805 / NCIMB 9133 / AM1) (Methylobacterium extorquens) protein is Bifunctional protein MdtA.